Reading from the N-terminus, the 228-residue chain is Probable GTP-binding protein EngB (228 aa).

Residues 48-222 (YGLEVAFVGY…QFVLNNWFSS (175 aa)) enclose the EngB-type G domain. GTP is bound by residues 56-63 (GYSNSGKS), 83-87 (GRTRL), 101-104 (DFPG), 168-171 (NKMD), and 201-203 (FSS). Residues Ser63 and Thr85 each contribute to the Mg(2+) site.

It belongs to the TRAFAC class TrmE-Era-EngA-EngB-Septin-like GTPase superfamily. EngB GTPase family. The cofactor is Mg(2+).

Its function is as follows. Necessary for normal cell division and for the maintenance of normal septation. This Buchnera aphidicola subsp. Baizongia pistaciae (strain Bp) protein is Probable GTP-binding protein EngB.